Consider the following 198-residue polypeptide: Recombination protein RecR (198 aa).

The C4-type zinc finger occupies Cys-57–Cys-72. In terms of domain architecture, Toprim spans Thr-80 to Ala-175.

This sequence belongs to the RecR family.

Functionally, may play a role in DNA repair. It seems to be involved in an RecBC-independent recombinational process of DNA repair. It may act with RecF and RecO. This chain is Recombination protein RecR, found in Streptococcus pneumoniae (strain Hungary19A-6).